We begin with the raw amino-acid sequence, 680 residues long: DNA-directed RNA polymerase subunit beta' (680 aa).

Zn(2+) contacts are provided by Cys69, Cys71, Cys87, and Cys90. Mg(2+) is bound by residues Asp489, Asp491, and Asp493.

Belongs to the RNA polymerase beta' chain family. RpoC1 subfamily. In plastids the minimal PEP RNA polymerase catalytic core is composed of four subunits: alpha, beta, beta', and beta''. When a (nuclear-encoded) sigma factor is associated with the core the holoenzyme is formed, which can initiate transcription. The cofactor is Mg(2+). Requires Zn(2+) as cofactor.

It localises to the plastid. Its subcellular location is the chloroplast. It catalyses the reaction RNA(n) + a ribonucleoside 5'-triphosphate = RNA(n+1) + diphosphate. Functionally, DNA-dependent RNA polymerase catalyzes the transcription of DNA into RNA using the four ribonucleoside triphosphates as substrates. The protein is DNA-directed RNA polymerase subunit beta' of Draba nemorosa (Woodland whitlowgrass).